Here is a 120-residue protein sequence, read N- to C-terminus: MREKPKYLPPTLREKHRYIAFQLIGERPFRKDEVKKAIWEASLSTLGVLGSAKAKPWFIRFDEKSQTGIVRVDRKHVEELRFALTLVTEINGSKAIFRTLGVSGTIKRLKRKFLAEFGWR.

It belongs to the eukaryotic/archaeal RNase P protein component 2 family. As to quaternary structure, consists of a catalytic RNA component and at least 4-5 protein subunits.

The protein resides in the cytoplasm. It catalyses the reaction Endonucleolytic cleavage of RNA, removing 5'-extranucleotides from tRNA precursor.. Part of ribonuclease P, a protein complex that generates mature tRNA molecules by cleaving their 5'-ends. This chain is Ribonuclease P protein component 2, found in Thermococcus gammatolerans (strain DSM 15229 / JCM 11827 / EJ3).